Consider the following 122-residue polypeptide: MIQKETNLVVADNSGAKKVRCIHVFGGTGRRYAALGDQIMVSVKAAVPGGVVKKKDVCKAVVVRCVKEQKRKDGSYIRFDENAVVLLNAQGEPRGTRIFGPVARELRDKRYMKIVSLAPEVL.

The protein belongs to the universal ribosomal protein uL14 family. In terms of assembly, part of the 50S ribosomal subunit. Forms a cluster with proteins L3 and L19. In the 70S ribosome, L14 and L19 interact and together make contacts with the 16S rRNA in bridges B5 and B8.

Functionally, binds to 23S rRNA. Forms part of two intersubunit bridges in the 70S ribosome. The protein is Large ribosomal subunit protein uL14 of Chlorobaculum tepidum (strain ATCC 49652 / DSM 12025 / NBRC 103806 / TLS) (Chlorobium tepidum).